The sequence spans 468 residues: FAD-linked oxidoreductase hasG (468 aa).

The FAD-binding PCMH-type domain occupies 37-211 (LGKIPAAVVQ…VEATFRAYPW (175 aa)).

Belongs to the oxygen-dependent FAD-linked oxidoreductase family. FAD is required as a cofactor.

It participates in secondary metabolite biosynthesis. In terms of biological role, FAD-linked oxidoreductase; part of the gene cluster that mediates the biosynthesis of hexadehydro-astechrome (HAS), a tryptophan-derived iron(III)-complex that acts as a virulence factor in infected mice. Within the pathway, hasG converts the prenyl to a methylbutadienyl side chain. The HAS biosynthesis begins with the synthesis of a tethered Trp-Ala dipeptide by the NRPS hasD. The 7-dimethylallyltryptophan synthase hasE then catalyzes the prenylation of the hasD-tethered tryptophan or the resulting tethered Trp-Ala dipeptide at the C-7 position of the indole moiety. HAS biosynthesis continues via tethered intermediates with the succesive actions of the cytochrome P450 monooxygenase hasH, the O-methyltransferase hasC, and the FAD-linked oxidoreductase hasG. The resulting O-methylated diketopiperazine is then released from hasD. Finally, three O-methylated diketopiperazine molecules assemble in a trimeric complex with Fe(III) to produce hexadehydro-astechrome. The polypeptide is FAD-linked oxidoreductase hasG (Aspergillus fumigatus (strain CBS 144.89 / FGSC A1163 / CEA10) (Neosartorya fumigata)).